Consider the following 208-residue polypeptide: Small ribosomal subunit protein uS4 (208 aa).

In terms of domain architecture, S4 RNA-binding spans 98-166 (SRLDNVVYRM…VKEAIEASRN (69 aa)).

The protein belongs to the universal ribosomal protein uS4 family. Part of the 30S ribosomal subunit. Contacts protein S5. The interaction surface between S4 and S5 is involved in control of translational fidelity.

One of the primary rRNA binding proteins, it binds directly to 16S rRNA where it nucleates assembly of the body of the 30S subunit. In terms of biological role, with S5 and S12 plays an important role in translational accuracy. The chain is Small ribosomal subunit protein uS4 from Kosmotoga olearia (strain ATCC BAA-1733 / DSM 21960 / TBF 19.5.1).